Reading from the N-terminus, the 407-residue chain is Na(+)-translocating NADH-quinone reductase subunit F (407 aa).

The helical transmembrane segment at 3–23 threads the bilayer; the sequence is IILGVVMFTLIVLALTVMILF. The 2Fe-2S ferredoxin-type domain maps to 32 to 126; it reads GDITVEINED…NLKIELPEEI (95 aa). [2Fe-2S] cluster contacts are provided by Cys69, Cys75, Cys78, and Cys110. Positions 129-269 constitute an FAD-binding FR-type domain; sequence VKKWTCEVIS…SGPFGEFFAK (141 aa).

This sequence belongs to the NqrF family. In terms of assembly, composed of six subunits; NqrA, NqrB, NqrC, NqrD, NqrE and NqrF. The cofactor is [2Fe-2S] cluster. Requires FAD as cofactor.

The protein resides in the cell inner membrane. The catalysed reaction is a ubiquinone + n Na(+)(in) + NADH + H(+) = a ubiquinol + n Na(+)(out) + NAD(+). In terms of biological role, NQR complex catalyzes the reduction of ubiquinone-1 to ubiquinol by two successive reactions, coupled with the transport of Na(+) ions from the cytoplasm to the periplasm. The first step is catalyzed by NqrF, which accepts electrons from NADH and reduces ubiquinone-1 to ubisemiquinone by a one-electron transfer pathway. This is Na(+)-translocating NADH-quinone reductase subunit F from Yersinia pseudotuberculosis serotype I (strain IP32953).